The sequence spans 234 residues: N-(5'-phosphoribosyl)anthranilate isomerase 1 (234 aa).

This sequence belongs to the TrpF family.

It catalyses the reaction N-(5-phospho-beta-D-ribosyl)anthranilate = 1-(2-carboxyphenylamino)-1-deoxy-D-ribulose 5-phosphate. The protein operates within amino-acid biosynthesis; L-tryptophan biosynthesis; L-tryptophan from chorismate: step 3/5. The polypeptide is N-(5'-phosphoribosyl)anthranilate isomerase 1 (trpF1) (Methanosarcina mazei (strain ATCC BAA-159 / DSM 3647 / Goe1 / Go1 / JCM 11833 / OCM 88) (Methanosarcina frisia)).